The primary structure comprises 225 residues: NAD(P)H-quinone oxidoreductase subunit K, chloroplastic (225 aa).

[4Fe-4S] cluster-binding residues include Cys-43, Cys-44, Cys-108, and Cys-139.

This sequence belongs to the complex I 20 kDa subunit family. In terms of assembly, NDH is composed of at least 16 different subunits, 5 of which are encoded in the nucleus. It depends on [4Fe-4S] cluster as a cofactor.

The protein resides in the plastid. The protein localises to the chloroplast thylakoid membrane. The enzyme catalyses a plastoquinone + NADH + (n+1) H(+)(in) = a plastoquinol + NAD(+) + n H(+)(out). It catalyses the reaction a plastoquinone + NADPH + (n+1) H(+)(in) = a plastoquinol + NADP(+) + n H(+)(out). In terms of biological role, NDH shuttles electrons from NAD(P)H:plastoquinone, via FMN and iron-sulfur (Fe-S) centers, to quinones in the photosynthetic chain and possibly in a chloroplast respiratory chain. The immediate electron acceptor for the enzyme in this species is believed to be plastoquinone. Couples the redox reaction to proton translocation, and thus conserves the redox energy in a proton gradient. In Draba nemorosa (Woodland whitlowgrass), this protein is NAD(P)H-quinone oxidoreductase subunit K, chloroplastic.